The chain runs to 209 residues: Thymidylate kinase (209 aa).

Glycine 11–threonine 18 serves as a coordination point for ATP.

Belongs to the thymidylate kinase family.

It carries out the reaction dTMP + ATP = dTDP + ADP. Phosphorylation of dTMP to form dTDP in both de novo and salvage pathways of dTTP synthesis. This Streptococcus thermophilus (strain ATCC BAA-250 / LMG 18311) protein is Thymidylate kinase.